Consider the following 341-residue polypeptide: Transmembrane protein 120A-A (341 aa).

Residues 1-131 are Cytoplasmic-facing; the sequence is MLFNPTGLTE…KQSKFAYKDE (131 aa). Residue Lys129 participates in CoA binding. The chain crosses the membrane as a helical span at residues 132–151; the sequence is YEKFKLYLTVLLLFFSFTCR. At 152-157 the chain is on the extracellular side; it reads FLVSYR. Residues 158 to 176 form a helical membrane-spanning segment; it reads VVDALFNFLLVWYYCTLTI. The Cytoplasmic segment spans residues 177–189; it reads RESILINNGSKIK. 2 residues coordinate CoA: Ser186 and Lys187. The helical transmembrane segment at 190–208 threads the bilayer; the sequence is GWWVFQHYVSTFLSGVMLT. Residues 209-217 lie on the Extracellular side of the membrane; sequence WPDGELYQM. A helical transmembrane segment spans residues 218-239; it reads FRNQFLSYSMYINFVQFFQYYY. Gln236, Tyr239, Gln240, and His282 together coordinate CoA. The Cytoplasmic segment spans residues 240–269; that stretch reads QSGCLYRLRALGERHNMDLTVEGFQSWMWR. A helical transmembrane segment spans residues 270–293; it reads GLTFLLPFLFLGHFFQLYNGITLF. Topologically, residues 294–303 are extracellular; it reads QMTQLPEWKE. A helical transmembrane segment spans residues 304–329; sequence WQVLMCGSTFLVLFMGNFFTTLGVVY. The Cytoplasmic segment spans residues 330–341; that stretch reads HKYMDQDKAKGL. Position 331 (Lys331) interacts with CoA.

This sequence belongs to the TMEM120 family. Homodimer.

Its subcellular location is the cell membrane. It localises to the nucleus inner membrane. The protein localises to the endoplasmic reticulum. Multifunctional protein involved in mechanosensation, and plays an essential role in lipid metabolism. May function as a potential ion channel involved in sensing mechanical stimuli. TMEM120A is structurally similar to a lipid-modifying enzyme, ELOVL7, and contains a bound coenzyme A molecule, which suggests it might function as an enzyme in lipid metabolism. This is Transmembrane protein 120A-A (tmem120aa) from Danio rerio (Zebrafish).